The following is a 239-amino-acid chain: Phosphoglycolate phosphatase (239 aa).

Catalysis depends on Asp9, which acts as the Nucleophile. Mg(2+) is bound by residues Asp9 and Asp11. Lys157 serves as a coordination point for substrate. Residues Asp180 and Asp184 each coordinate Mg(2+).

It belongs to the archaeal SPP-like hydrolase family. The cofactor is Mg(2+).

The enzyme catalyses 2-phosphoglycolate + H2O = glycolate + phosphate. In terms of biological role, catalyzes the dephosphorylation of 2-phosphoglycolate. This chain is Phosphoglycolate phosphatase, found in Thermococcus kodakarensis (strain ATCC BAA-918 / JCM 12380 / KOD1) (Pyrococcus kodakaraensis (strain KOD1)).